The following is a 347-amino-acid chain: Olfactory receptor 6J1 (347 aa).

The Extracellular segment spans residues 1 to 24 (MGNWTAAVTEFVLLGFSLSREVEL). N3 carries an N-linked (GlcNAc...) asparagine glycan. The helical transmembrane segment at 25–45 (LLLVLLLPTFLLTLLGNLLII) threads the bilayer. Over 46 to 53 (STVLSCSR) the chain is Cytoplasmic. A helical transmembrane segment spans residues 54 to 74 (LHTPMYFFLCNLSILDILFTS). Topologically, residues 75 to 98 (VISPKVLANLGSRDKTISFAGCIT) are extracellular. The cysteines at positions 96 and 188 are disulfide-linked. Residues 99–119 (QCYFYFFLGTVEFLLLTVMSY) form a helical membrane-spanning segment. The Cytoplasmic segment spans residues 120-138 (DRYATICCPLRYTTIMRPS). A helical transmembrane segment spans residues 139–159 (VCIGTVVFSWVGGFLSVLFPT). Topologically, residues 160–196 (ILISQLPFCGSNIINHFFCDSGPLLALACADTTAIEL) are extracellular. The chain crosses the membrane as a helical span at residues 197-216 (MDFMLSSMVILCCIVLVAYS). Residues 217–236 (YTYIILTIVRIPSASGRKKA) lie on the Cytoplasmic side of the membrane. A helical membrane pass occupies residues 237-257 (FNTCASHLTIVIISSGITVFI). The Extracellular portion of the chain corresponds to 258–270 (YVTPSQKEYLEIN). The helical transmembrane segment at 271–291 (KIPLVLSSVVTPFLNPFIYTL) threads the bilayer. At 292–347 (RNDTVQGVLRDVWVRVRGVFEKRMRAVLRSRLSSNKDHQGRACSSPPCVYSVKLQC) the chain is on the cytoplasmic side.

It belongs to the G-protein coupled receptor 1 family.

It is found in the cell membrane. Its function is as follows. Odorant receptor. The chain is Olfactory receptor 6J1 (OR6J1) from Homo sapiens (Human).